We begin with the raw amino-acid sequence, 281 residues long: uncharacterized protein (281 aa).

The N-terminal stretch at 1-23 is a signal peptide; the sequence is MKLYRSLKAALLPGICTSILLAS. Cys-24 is lipidated: N-palmitoyl cysteine. The S-diacylglycerol cysteine moiety is linked to residue Cys-24. Residues 145-165 are disordered; the sequence is HHDHNHMHNHEHEHEEHHDEE. Residues 150–161 are compositionally biased toward basic and acidic residues; that stretch reads HMHNHEHEHEEH.

The protein localises to the cell membrane. This is an uncharacterized protein from Mycoplasma genitalium (strain ATCC 33530 / DSM 19775 / NCTC 10195 / G37) (Mycoplasmoides genitalium).